The chain runs to 98 residues: Small ribosomal subunit protein bS6 (98 aa).

The protein belongs to the bacterial ribosomal protein bS6 family.

In terms of biological role, binds together with bS18 to 16S ribosomal RNA. This is Small ribosomal subunit protein bS6 from Staphylococcus carnosus (strain TM300).